Here is a 663-residue protein sequence, read N- to C-terminus: Dual specificity protein phosphatase 8 (663 aa).

One can recognise a Rhodanese domain in the interval 23 to 138 (GPGGPLVIDS…FSSCFPGLCE (116 aa)). The Tyrosine-protein phosphatase domain maps to 160–302 (GLTRILPHLY…LLEYERSLKL (143 aa)). Cys246 acts as the Phosphocysteine intermediate in catalysis. Disordered regions lie at residues 313–367 (LGTP…STAP) and 404–624 (YAPS…FKRR). Low complexity-rich tracts occupy residues 334–353 (STSESAATGSEAATAAREGS), 427–448 (LDSPSGGTLGLPSPSPDSPDSV), and 546–557 (SAGAPGPGNSSS). Residues 558–577 (SGGGGGGGGGGGGGGGGGGS) are compositionally biased toward gly residues. Residues 578–600 (SSSNSSSSSSSSSSSSSSSSSSS) show a composition bias toward low complexity.

It belongs to the protein-tyrosine phosphatase family. Non-receptor class dual specificity subfamily. In terms of assembly, monomer. Expressed predominantly in brain and lung.

The protein localises to the cytoplasm. It is found in the nucleus. The enzyme catalyses O-phospho-L-tyrosyl-[protein] + H2O = L-tyrosyl-[protein] + phosphate. It catalyses the reaction O-phospho-L-seryl-[protein] + H2O = L-seryl-[protein] + phosphate. It carries out the reaction O-phospho-L-threonyl-[protein] + H2O = L-threonyl-[protein] + phosphate. In terms of biological role, has phosphatase activity with synthetic phosphatase substrates and negatively regulates mitogen-activated protein kinase activity, presumably by catalysing their dephosphorylation. Expected to display protein phosphatase activity toward phosphotyrosine, phosphoserine and phosphothreonine residues. In Mus musculus (Mouse), this protein is Dual specificity protein phosphatase 8 (Dusp8).